A 387-amino-acid chain; its full sequence is Exodeoxyribonuclease 7 large subunit (387 aa).

It belongs to the XseA family. Heterooligomer composed of large and small subunits.

It is found in the cytoplasm. The enzyme catalyses Exonucleolytic cleavage in either 5'- to 3'- or 3'- to 5'-direction to yield nucleoside 5'-phosphates.. In terms of biological role, bidirectionally degrades single-stranded DNA into large acid-insoluble oligonucleotides, which are then degraded further into small acid-soluble oligonucleotides. The chain is Exodeoxyribonuclease 7 large subunit from Campylobacter jejuni subsp. jejuni serotype O:2 (strain ATCC 700819 / NCTC 11168).